Here is a 733-residue protein sequence, read N- to C-terminus: Phosphoribosylformylglycinamidine synthase subunit PurL (733 aa).

Residue H44 is part of the active site. The ATP site is built by Y47 and K86. Residue E88 coordinates Mg(2+). Substrate is bound by residues S89–H92 and R111. The active-site Proton acceptor is H90. D112 provides a ligand contact to Mg(2+). Q233 contacts substrate. D261 provides a ligand contact to Mg(2+). E305–Q307 lines the substrate pocket. ATP is bound by residues D492 and G529. Mg(2+) is bound at residue N530. S532 lines the substrate pocket.

This sequence belongs to the FGAMS family. As to quaternary structure, monomer. Part of the FGAM synthase complex composed of 1 PurL, 1 PurQ and 2 PurS subunits.

Its subcellular location is the cytoplasm. It carries out the reaction N(2)-formyl-N(1)-(5-phospho-beta-D-ribosyl)glycinamide + L-glutamine + ATP + H2O = 2-formamido-N(1)-(5-O-phospho-beta-D-ribosyl)acetamidine + L-glutamate + ADP + phosphate + H(+). It participates in purine metabolism; IMP biosynthesis via de novo pathway; 5-amino-1-(5-phospho-D-ribosyl)imidazole from N(2)-formyl-N(1)-(5-phospho-D-ribosyl)glycinamide: step 1/2. Its function is as follows. Part of the phosphoribosylformylglycinamidine synthase complex involved in the purines biosynthetic pathway. Catalyzes the ATP-dependent conversion of formylglycinamide ribonucleotide (FGAR) and glutamine to yield formylglycinamidine ribonucleotide (FGAM) and glutamate. The FGAM synthase complex is composed of three subunits. PurQ produces an ammonia molecule by converting glutamine to glutamate. PurL transfers the ammonia molecule to FGAR to form FGAM in an ATP-dependent manner. PurS interacts with PurQ and PurL and is thought to assist in the transfer of the ammonia molecule from PurQ to PurL. The chain is Phosphoribosylformylglycinamidine synthase subunit PurL from Thermomicrobium roseum (strain ATCC 27502 / DSM 5159 / P-2).